A 445-amino-acid polypeptide reads, in one-letter code: Oxysterols receptor LXR-alpha (445 aa).

2 disordered regions span residues 1–34 (MSLW…QGGN) and 62–86 (TALL…KKGP). A transactivation AF-1; required for ligand-independent transactivation function region spans residues 1–94 (MSLWLEAAVP…GPAPKMLGNE (94 aa)). The segment at residues 93-168 (NELCSVCGDK…AGMREECVLS (76 aa)) is a DNA-binding region (nuclear receptor). 2 NR C4-type zinc fingers span residues 96–116 (CSVC…CEGC) and 132–156 (CHSG…LRKC). The tract at residues 178–200 (KRQEEEQAQATSVSPRVSSPPQV) is disordered. Residues 189–200 (SVSPRVSSPPQV) show a composition bias toward low complexity. Ser191 is modified (phosphoserine). The interval 203–445 (QLSPEQLGMI…LLSEIWDVHE (243 aa)) is transactivation AF-2; required for ligand-dependent transactivation function; mediates interaction with CCAR2. Residues 207 to 445 (EQLGMIEKLV…LLSEIWDVHE (239 aa)) enclose the NR LBD domain.

This sequence belongs to the nuclear hormone receptor family. NR1 subfamily. As to quaternary structure, heterodimer of NR1H3 and RXR (retinoic acid receptor). Interacts with CCAR2 (via N-terminus) in a ligand-independent manner. Interacts with SIRT1 and this interaction is inhibited by CCAR2. Ubiquitinated by UBR5, leading to its degradation: UBR5 specifically recognizes and binds ligand-bound NR1H3 when it is not associated with coactivators (NCOAs). In presence of NCOAs, the UBR5-degron is not accessible, preventing its ubiquitination and degradation. In adults it is expressed in spleen, pituitary, lung, liver, and fat. Weaker expression is observed in several other tissues.

The protein localises to the nucleus. The protein resides in the cytoplasm. Nuclear receptor that exhibits a ligand-dependent transcriptional activation activity. Interaction with retinoic acid receptor (RXR) shifts RXR from its role as a silent DNA-binding partner to an active ligand-binding subunit in mediating retinoid responses through target genes defined by LXRES. LXRES are DR4-type response elements characterized by direct repeats of two similar hexanuclotide half-sites spaced by four nucleotides. Plays an important role in the regulation of cholesterol homeostasis, regulating cholesterol uptake through MYLIP-dependent ubiquitination of LDLR, VLDLR and LRP8. Interplays functionally with RORA for the regulation of genes involved in liver metabolism. Induces LPCAT3-dependent phospholipid remodeling in endoplasmic reticulum (ER) membranes of hepatocytes, driving SREBF1 processing and lipogenesis. Via LPCAT3, triggers the incorporation of arachidonate into phosphatidylcholines of ER membranes, increasing membrane dynamics and enabling triacylglycerols transfer to nascent very low-density lipoprotein (VLDL) particles. Via LPCAT3 also counteracts lipid-induced ER stress response and inflammation, likely by modulating SRC kinase membrane compartmentalization and limiting the synthesis of lipid inflammatory mediators. The chain is Oxysterols receptor LXR-alpha (Nr1h3) from Rattus norvegicus (Rat).